Here is a 171-residue protein sequence, read N- to C-terminus: S-ribosylhomocysteine lyase (171 aa).

Positions 54, 58, and 128 each coordinate Fe cation.

It belongs to the LuxS family. Homodimer. Fe cation is required as a cofactor.

The enzyme catalyses S-(5-deoxy-D-ribos-5-yl)-L-homocysteine = (S)-4,5-dihydroxypentane-2,3-dione + L-homocysteine. Functionally, involved in the synthesis of autoinducer 2 (AI-2) which is secreted by bacteria and is used to communicate both the cell density and the metabolic potential of the environment. The regulation of gene expression in response to changes in cell density is called quorum sensing. Catalyzes the transformation of S-ribosylhomocysteine (RHC) to homocysteine (HC) and 4,5-dihydroxy-2,3-pentadione (DPD). In Shigella boydii serotype 4 (strain Sb227), this protein is S-ribosylhomocysteine lyase.